The sequence spans 184 residues: Shikimate kinase (184 aa).

Residue 15-20 (GAGKTS) participates in ATP binding. Mg(2+) is bound at residue T19. Positions 37, 61, and 83 each coordinate substrate. Residue R123 participates in ATP binding. Residue R142 participates in substrate binding.

The protein belongs to the shikimate kinase family. As to quaternary structure, monomer. Mg(2+) serves as cofactor.

Its subcellular location is the cytoplasm. It carries out the reaction shikimate + ATP = 3-phosphoshikimate + ADP + H(+). It functions in the pathway metabolic intermediate biosynthesis; chorismate biosynthesis; chorismate from D-erythrose 4-phosphate and phosphoenolpyruvate: step 5/7. Catalyzes the specific phosphorylation of the 3-hydroxyl group of shikimic acid using ATP as a cosubstrate. The sequence is that of Shikimate kinase from Coxiella burnetii (strain CbuK_Q154) (Coxiella burnetii (strain Q154)).